We begin with the raw amino-acid sequence, 755 residues long: Serine/threonine-protein kinase GA29083 (755 aa).

Over residues 18–52 (QASASGSGTPKKTAASSAAAQNSKQLLDQLSQQQK) the composition is skewed to low complexity. A disordered region spans residues 18–128 (QASASGSGTP…GSANTNGSAS (111 aa)). Basic and acidic residues-rich tracts occupy residues 53-66 (AQEE…RDCD) and 74-84 (EPEKDLDELRD). The span at 87–99 (GSLTGSGSVGKSN) shows a compositional bias: polar residues. Low complexity predominate over residues 100–128 (GSLSGASSTTSAPAGTSTPGSANTNGSAS). Doublecortin domains are found at residues 157–243 (HRIK…VDYN) and 314–397 (RIVT…VEDF). A Protein kinase domain is found at 484 to 742 (YTLSQIIGDG…SEDILDHYWT (259 aa)). Residues 490 to 498 (IGDGNFAIV) and K513 each bind ATP. D605 serves as the catalytic Proton acceptor.

The protein belongs to the protein kinase superfamily. CAMK Ser/Thr protein kinase family. CaMK subfamily.

The catalysed reaction is L-seryl-[protein] + ATP = O-phospho-L-seryl-[protein] + ADP + H(+). It catalyses the reaction L-threonyl-[protein] + ATP = O-phospho-L-threonyl-[protein] + ADP + H(+). In Drosophila pseudoobscura pseudoobscura (Fruit fly), this protein is Serine/threonine-protein kinase GA29083.